Here is a 629-residue protein sequence, read N- to C-terminus: MTDSFYRYDVIVIGAGHAGSEAALAAARTGAHTLLLTHNIETIGAMSCNPAIGGIGKGHLVKEIDALGGAMAHAADAAGIQWRTLNASKGPAVRATRCQADRSLYRAAIRQMIEGQARLNIFQAEVDDLLFEGDTVCGAITHTGLHFKAPAVVLTAGTFLAGKIHIGPTQYAAGRMGDPPATMLAARLRERLLTVARLKTGTPPRIDGRTLNYTAMQEQPGDAPRPTMSFIGNSASHPPQVSCWITQTTERTHEIIRAALHRSPLYSGQIEGTGPRYCPSIEDKVVRFAEKNSHQIFVEPEGLNVIDIYPNGISTSLPFDVQLELVRSIRGFEQAHITRPGYAIEYDFFDPRGLKASLETKAIAGLFFAGQINGTTGYEEAAAQGLLAGLNAARHVRGLSSWTPRRDQAYLGVLVDDLITHGTNEPYRMFTSRAEYRLQLREDNADARLTAIGRDLGLVDDARWAHFNAKQEAVARECGRLSALWATPGNALGREVKETLGVTLSRETNIIDLMKRPELDYAALMRVPSLGPGVDDAQVAEQVEISVKYAGYLNRQSEEITRQQRHEATAIPLEFDYAAVRGLSTEVLQKLQHIQPQTVGQAQRIPGMTPAAISLLLVHLERMRRNRVA.

Residue 14–19 coordinates FAD; that stretch reads GAGHAG. Residue 274-288 coordinates NAD(+); that stretch reads GPRYCPSIEDKVVRF.

It belongs to the MnmG family. In terms of assembly, homodimer. Heterotetramer of two MnmE and two MnmG subunits. It depends on FAD as a cofactor.

It localises to the cytoplasm. Functionally, NAD-binding protein involved in the addition of a carboxymethylaminomethyl (cmnm) group at the wobble position (U34) of certain tRNAs, forming tRNA-cmnm(5)s(2)U34. The protein is tRNA uridine 5-carboxymethylaminomethyl modification enzyme MnmG of Xylella fastidiosa (strain Temecula1 / ATCC 700964).